The following is a 35-amino-acid chain: Basic endochitinase CH1 (35 aa).

The protein belongs to the glycosyl hydrolase 19 family. Chitinase class I subfamily.

The enzyme catalyses Random endo-hydrolysis of N-acetyl-beta-D-glucosaminide (1-&gt;4)-beta-linkages in chitin and chitodextrins.. Its function is as follows. Defense against chitin-containing fungal pathogens. The chain is Basic endochitinase CH1 from Castanea sativa (Sweet chestnut).